The chain runs to 338 residues: Putative peptide import ATP-binding protein BruAb2_0796 (338 aa).

The region spanning 7–263 (LDIEGLRTVF…PRHPYTMGLL (257 aa)) is the ABC transporter domain. Residue 43–50 (GESGSGKS) participates in ATP binding.

The protein belongs to the ABC transporter superfamily. As to quaternary structure, the complex is composed of two ATP-binding proteins (BruAb2_0796 and BruAb2_0797), two transmembrane proteins (BruAb2_0794) and a solute-binding protein (BruAb2_0792).

Its subcellular location is the cell inner membrane. Functionally, probably part of an ABC transporter complex that could be involved in peptide import. Probably responsible for energy coupling to the transport system. In Brucella abortus biovar 1 (strain 9-941), this protein is Putative peptide import ATP-binding protein BruAb2_0796.